The sequence spans 487 residues: GTPase Der (487 aa).

2 consecutive EngA-type G domains span residues 5-169 (PKLA…SREI) and 178-351 (IKVA…ANSQ). Residues 11–18 (GRPNVGKS), 58–62 (DTGGI), 121–124 (NKID), 184–191 (GRANVGKS), 231–235 (DTAGI), and 296–299 (NKWD) each bind GTP. A KH-like domain is found at 352 to 439 (KRITTHQLNK…IHLKGKTKKD (88 aa)). The disordered stretch occupies residues 441 to 466 (PVSSLSLTRKQTKSTDQENNEYDELY).

The protein belongs to the TRAFAC class TrmE-Era-EngA-EngB-Septin-like GTPase superfamily. EngA (Der) GTPase family. As to quaternary structure, associates with the 50S ribosomal subunit.

Its function is as follows. GTPase that plays an essential role in the late steps of ribosome biogenesis. This Protochlamydia amoebophila (strain UWE25) protein is GTPase Der.